Consider the following 193-residue polypeptide: 7-methyl-GTP pyrophosphatase (193 aa).

Catalysis depends on Asp70, which acts as the Proton acceptor.

The protein belongs to the Maf family. YceF subfamily. It depends on a divalent metal cation as a cofactor.

The protein resides in the cytoplasm. It catalyses the reaction N(7)-methyl-GTP + H2O = N(7)-methyl-GMP + diphosphate + H(+). In terms of biological role, nucleoside triphosphate pyrophosphatase that hydrolyzes 7-methyl-GTP (m(7)GTP). May have a dual role in cell division arrest and in preventing the incorporation of modified nucleotides into cellular nucleic acids. This is 7-methyl-GTP pyrophosphatase from Vibrio parahaemolyticus serotype O3:K6 (strain RIMD 2210633).